The following is a 393-amino-acid chain: MQLDSIDTALQALKKGESIIVVDDENRENEGDLVAVTEWMNDNTVNFMATYGKGLICAPISNAIAEKLDLNPMVTHNSDVYGTQFTVSVDHIQTTTGISADERTMTARALIDEQATGSDFNKPGHLFPLIAQDNGVLSRRGHTEASVDLAKLTGAKPAALICEIMDEDGTMAKGASLEAFKETHGLVMISIEDLEKYRKSSISKLDAKAKVKMPTEYGNFDMYGFTTDNSEEDIVVIANGDINKTENVRIHSACLTGDIFHSQRCDCGEQLAASMKYIAEHGGMILYLPQEGRGIGLINKLKAYELIEQGYDTVSANIALGFEEDLRDYQNAAQILKYFGVDSVNLLSNNPKKFESLESYGIHIAKRIELIVPTNAYNQDYMDTKKEKMGHLI.

Residues 1–200 (MQLDSIDTAL…IEDLEKYRKS (200 aa)) are DHBP synthase. Residues 27–28 (RE), D32, 139–143 (RRGHT), and E163 contribute to the D-ribulose 5-phosphate site. Residue E28 participates in Mg(2+) binding. A Mg(2+)-binding site is contributed by H142. The tract at residues 201–393 (SISKLDAKAK…TKKEKMGHLI (193 aa)) is GTP cyclohydrolase II. GTP is bound at residue 249–253 (RIHSA). C254, C265, and C267 together coordinate Zn(2+). GTP is bound by residues Q270, 291 to 293 (EGR), and T313. D325 (proton acceptor; for GTP cyclohydrolase activity) is an active-site residue. R327 (nucleophile; for GTP cyclohydrolase activity) is an active-site residue. Residues S348 and K353 each contribute to the GTP site.

It in the N-terminal section; belongs to the DHBP synthase family. The protein in the C-terminal section; belongs to the GTP cyclohydrolase II family. Requires Mg(2+) as cofactor. Mn(2+) is required as a cofactor. The cofactor is Zn(2+).

The catalysed reaction is D-ribulose 5-phosphate = (2S)-2-hydroxy-3-oxobutyl phosphate + formate + H(+). It catalyses the reaction GTP + 4 H2O = 2,5-diamino-6-hydroxy-4-(5-phosphoribosylamino)-pyrimidine + formate + 2 phosphate + 3 H(+). Its pathway is cofactor biosynthesis; riboflavin biosynthesis; 2-hydroxy-3-oxobutyl phosphate from D-ribulose 5-phosphate: step 1/1. The protein operates within cofactor biosynthesis; riboflavin biosynthesis; 5-amino-6-(D-ribitylamino)uracil from GTP: step 1/4. Functionally, catalyzes the conversion of D-ribulose 5-phosphate to formate and 3,4-dihydroxy-2-butanone 4-phosphate. Its function is as follows. Catalyzes the conversion of GTP to 2,5-diamino-6-ribosylamino-4(3H)-pyrimidinone 5'-phosphate (DARP), formate and pyrophosphate. This is Riboflavin biosynthesis protein RibBA from Staphylococcus saprophyticus subsp. saprophyticus (strain ATCC 15305 / DSM 20229 / NCIMB 8711 / NCTC 7292 / S-41).